The sequence spans 109 residues: Large ribosomal subunit protein uL24 (109 aa).

It belongs to the universal ribosomal protein uL24 family. Part of the 50S ribosomal subunit.

Its function is as follows. One of two assembly initiator proteins, it binds directly to the 5'-end of the 23S rRNA, where it nucleates assembly of the 50S subunit. Functionally, one of the proteins that surrounds the polypeptide exit tunnel on the outside of the subunit. In Legionella pneumophila subsp. pneumophila (strain Philadelphia 1 / ATCC 33152 / DSM 7513), this protein is Large ribosomal subunit protein uL24.